A 124-amino-acid chain; its full sequence is Small ribosomal subunit protein uS10z/uS10x (124 aa).

It belongs to the universal ribosomal protein uS10 family.

The polypeptide is Small ribosomal subunit protein uS10z/uS10x (RPS20A) (Arabidopsis thaliana (Mouse-ear cress)).